The primary structure comprises 83 residues: Cytochrome b559 subunit alpha (83 aa).

A helical transmembrane segment spans residues 21 to 35 (VIHSITIPSLFIAGW). Heme is bound at residue His-23.

It belongs to the PsbE/PsbF family. Heterodimer of an alpha subunit and a beta subunit. PSII is composed of 1 copy each of membrane proteins PsbA, PsbB, PsbC, PsbD, PsbE, PsbF, PsbH, PsbI, PsbJ, PsbK, PsbL, PsbM, PsbT, PsbX, PsbY, PsbZ, Psb30/Ycf12, at least 3 peripheral proteins of the oxygen-evolving complex and a large number of cofactors. It forms dimeric complexes. Heme b is required as a cofactor.

The protein resides in the plastid. Its subcellular location is the chloroplast thylakoid membrane. This b-type cytochrome is tightly associated with the reaction center of photosystem II (PSII). PSII is a light-driven water:plastoquinone oxidoreductase that uses light energy to abstract electrons from H(2)O, generating O(2) and a proton gradient subsequently used for ATP formation. It consists of a core antenna complex that captures photons, and an electron transfer chain that converts photonic excitation into a charge separation. This Daucus carota (Wild carrot) protein is Cytochrome b559 subunit alpha.